The following is an 853-amino-acid chain: NADH-quinone oxidoreductase subunit G 2 (853 aa).

A 2Fe-2S ferredoxin-type domain is found at 1–78 (MIKVTIDEQS…GMVVRTNTPL (78 aa)). Residues Cys34, Cys45, Cys48, and Cys62 each contribute to the [2Fe-2S] cluster site. A 4Fe-4S His(Cys)3-ligated-type domain is found at 78–117 (LIEETRSSMLDMLLANHPLDCPICDKGGECELQDMVMAYG). Residues His94, Cys98, Cys101, Cys107, Cys148, Cys151, Cys154, Cys198, Cys224, Cys227, Cys231, and Cys259 each coordinate [4Fe-4S] cluster. 4Fe-4S ferredoxin-type domains are found at residues 139 to 170 (PVII…LGTV) and 179 to 209 (TGFE…FPYR). The 4Fe-4S Mo/W bis-MGD-type domain occupies 217-273 (LAETDTICPHCGTGCQLTVGARKGEFMRVRSDWEHGVNRETLCVRGRFGLDFIESRD).

Belongs to the complex I 75 kDa subunit family. Requires [2Fe-2S] cluster as cofactor. [4Fe-4S] cluster serves as cofactor.

It catalyses the reaction a quinone + NADH + 5 H(+)(in) = a quinol + NAD(+) + 4 H(+)(out). In terms of biological role, NDH-1 shuttles electrons from NADH, via FMN and iron-sulfur (Fe-S) centers, to quinones in the respiratory chain. The immediate electron acceptor for the enzyme in this species is believed to be ubiquinone. Couples the redox reaction to proton translocation (for every two electrons transferred, four hydrogen ions are translocated across the cytoplasmic membrane), and thus conserves the redox energy in a proton gradient. The protein is NADH-quinone oxidoreductase subunit G 2 (nuoG2) of Rhizobium meliloti (strain 1021) (Ensifer meliloti).